Reading from the N-terminus, the 428-residue chain is Protein CLP1 homolog (428 aa).

ATP contacts are provided by residues Glu-22, Lys-63, and 127–132; that span reads DVGKST.

Belongs to the Clp1 family. Clp1 subfamily.

The protein resides in the nucleus. Required for endonucleolytic cleavage during polyadenylation-dependent pre-mRNA 3'-end formation. The sequence is that of Protein CLP1 homolog from Nematostella vectensis (Starlet sea anemone).